The following is a 140-amino-acid chain: Small ribosomal subunit protein eS17x (140 aa).

The protein belongs to the eukaryotic ribosomal protein eS17 family.

The chain is Small ribosomal subunit protein eS17x (RPS17C) from Arabidopsis thaliana (Mouse-ear cress).